The following is a 371-amino-acid chain: Chaperone protein DnaJ (371 aa).

The J domain maps to 5–69; that stretch reads DYYEVLGLSK…QKRAQYDQFG (65 aa). The segment at 133–215 adopts a CR-type zinc-finger fold; that stretch reads GKELNVEIPV…CHGSGKVRKR (83 aa). Zn(2+)-binding residues include Cys-146, Cys-149, Cys-163, Cys-166, Cys-189, Cys-192, Cys-203, and Cys-206. 4 CXXCXGXG motif repeats span residues 146–153, 163–170, 189–196, and 203–210; these read CDTCKGSG, CKHCSGSG, CSHCSGTG, and CTTCHGSG.

It belongs to the DnaJ family. Homodimer. Requires Zn(2+) as cofactor.

The protein resides in the cytoplasm. In terms of biological role, participates actively in the response to hyperosmotic and heat shock by preventing the aggregation of stress-denatured proteins and by disaggregating proteins, also in an autonomous, DnaK-independent fashion. Unfolded proteins bind initially to DnaJ; upon interaction with the DnaJ-bound protein, DnaK hydrolyzes its bound ATP, resulting in the formation of a stable complex. GrpE releases ADP from DnaK; ATP binding to DnaK triggers the release of the substrate protein, thus completing the reaction cycle. Several rounds of ATP-dependent interactions between DnaJ, DnaK and GrpE are required for fully efficient folding. Also involved, together with DnaK and GrpE, in the DNA replication of plasmids through activation of initiation proteins. This is Chaperone protein DnaJ from Bacillus cereus (strain 03BB102).